The sequence spans 717 residues: Homeobox protein araucan (717 aa).

Disordered regions lie at residues 46–80 (APAMSPTGGQDCQGSQPSGGAGGDASSGALSPNAL), 94–130 (GGSSAGGGGPADLATGGSLDGNGVGTTPTAGGAGGGG), 317–371 (NKMT…AIDE), 395–418 (SGGYPGGGGSSSGHPGGYHPYHHQ), 478–516 (TPPPAYMGHQSMPLQQQQQQQQQQQQAQHQYPPSEAGRD), 549–615 (TNNS…ASQR), and 675–717 (ARLG…KFTN). The segment covering 94 to 103 (GGSSAGGGGP) has biased composition (gly residues). A DNA-binding region (homeobox; TALE-type) is located at residues 255–317 (LAARRKNATR…NARRRLKKEN (63 aa)). Basic and acidic residues predominate over residues 317 to 327 (NKMTWEPKNRT). S336 is modified (phosphoserine). Residues 337 to 347 (DDEKDKEDLEP) show a composition bias toward basic and acidic residues. Over residues 395-410 (SGGYPGGGGSSSGHPG) the composition is skewed to gly residues. Composition is skewed to low complexity over residues 492-507 (QQQQQQQQQQQQAQHQ), 559-589 (PPQQQQPQQQQQQLQQGGTIHTTGSSSGPII), 599-614 (QQQQQLQQQSQSTASQ), and 687-698 (SSGNSSSSSSSS).

Belongs to the TALE/IRO homeobox family.

Its subcellular location is the nucleus. Its function is as follows. Controls proneural and vein forming genes. Positive transcriptional controller of AC-SC (achaete-scute). May act as an activator that interacts with the transcriptional complex assembled on the AC and SC promoters and participates in transcription initiation. This Drosophila melanogaster (Fruit fly) protein is Homeobox protein araucan (ara).